Consider the following 215-residue polypeptide: Thymidylate kinase (215 aa).

11–18 contributes to the ATP binding site; that stretch reads GIDGAGKS.

It belongs to the thymidylate kinase family.

It carries out the reaction dTMP + ATP = dTDP + ADP. Functionally, phosphorylation of dTMP to form dTDP in both de novo and salvage pathways of dTTP synthesis. This Nitrosomonas europaea (strain ATCC 19718 / CIP 103999 / KCTC 2705 / NBRC 14298) protein is Thymidylate kinase.